The chain runs to 1050 residues: Valine--tRNA ligase (1050 aa).

Basic and acidic residues predominate over residues 37–57 (EKKAAASDKPVKEAKAKKEQT). Positions 37–72 (EKKAAASDKPVKEAKAKKEQTVEAAEPVDQTPTGQR) are disordered. Positions 127–137 (PNVTGNLHVGH) match the 'HIGH' region motif. The 'KMSKS' region signature appears at 642–646 (KMSKS). Lysine 645 contacts ATP.

Belongs to the class-I aminoacyl-tRNA synthetase family.

The enzyme catalyses tRNA(Val) + L-valine + ATP = L-valyl-tRNA(Val) + AMP + diphosphate. In Caenorhabditis elegans, this protein is Valine--tRNA ligase.